The following is a 332-amino-acid chain: 2,3-diketo-L-gulonate reductase (332 aa).

His-44 serves as the catalytic Proton donor. NAD(+) contacts are provided by residues 168-174 (ITMVDMS), 224-225 (WK), and 304-306 (GHE).

Belongs to the LDH2/MDH2 oxidoreductase family. DlgD subfamily. As to quaternary structure, homodimer.

It is found in the cytoplasm. The catalysed reaction is 3-dehydro-L-gulonate + NAD(+) = 2,3-dioxo-L-gulonate + NADH + H(+). It catalyses the reaction 3-dehydro-L-gulonate + NADP(+) = 2,3-dioxo-L-gulonate + NADPH + H(+). Catalyzes the reduction of 2,3-diketo-L-gulonate in the presence of NADH, to form 3-keto-L-gulonate. The polypeptide is 2,3-diketo-L-gulonate reductase (Klebsiella pneumoniae (strain 342)).